The sequence spans 374 residues: Protein RecA (374 aa).

Gly66–Thr73 is a binding site for ATP. A disordered region spans residues Leu327–Ser374. Over residues Thr338–Ser374 the composition is skewed to low complexity.

The protein belongs to the RecA family.

Its subcellular location is the cytoplasm. Functionally, can catalyze the hydrolysis of ATP in the presence of single-stranded DNA, the ATP-dependent uptake of single-stranded DNA by duplex DNA, and the ATP-dependent hybridization of homologous single-stranded DNAs. It interacts with LexA causing its activation and leading to its autocatalytic cleavage. The polypeptide is Protein RecA (Streptomyces lividans).